Reading from the N-terminus, the 352-residue chain is Histidinol-phosphate aminotransferase (352 aa).

An N6-(pyridoxal phosphate)lysine modification is found at Lys-221.

The protein belongs to the class-II pyridoxal-phosphate-dependent aminotransferase family. Histidinol-phosphate aminotransferase subfamily. Homodimer. The cofactor is pyridoxal 5'-phosphate.

It carries out the reaction L-histidinol phosphate + 2-oxoglutarate = 3-(imidazol-4-yl)-2-oxopropyl phosphate + L-glutamate. The protein operates within amino-acid biosynthesis; L-histidine biosynthesis; L-histidine from 5-phospho-alpha-D-ribose 1-diphosphate: step 7/9. The polypeptide is Histidinol-phosphate aminotransferase (Staphylococcus aureus (strain Mu3 / ATCC 700698)).